The sequence spans 333 residues: Phosphate acyltransferase (333 aa).

It belongs to the PlsX family. In terms of assembly, homodimer. Probably interacts with PlsY.

The protein localises to the cytoplasm. The catalysed reaction is a fatty acyl-[ACP] + phosphate = an acyl phosphate + holo-[ACP]. It functions in the pathway lipid metabolism; phospholipid metabolism. In terms of biological role, catalyzes the reversible formation of acyl-phosphate (acyl-PO(4)) from acyl-[acyl-carrier-protein] (acyl-ACP). This enzyme utilizes acyl-ACP as fatty acyl donor, but not acyl-CoA. The chain is Phosphate acyltransferase from Lactobacillus acidophilus (strain ATCC 700396 / NCK56 / N2 / NCFM).